Reading from the N-terminus, the 360-residue chain is Phospho-N-acetylmuramoyl-pentapeptide-transferase (360 aa).

10 helical membrane passes run Tyr-21–Gly-41, Thr-73–Leu-93, Thr-94–Val-114, Trp-132–Gly-152, Val-168–Ser-188, Gly-199–Thr-219, Leu-239–Tyr-259, Val-263–Leu-283, Phe-288–Val-308, and Val-338–Lys-358.

It belongs to the glycosyltransferase 4 family. MraY subfamily. Mg(2+) is required as a cofactor.

Its subcellular location is the cell inner membrane. The enzyme catalyses UDP-N-acetyl-alpha-D-muramoyl-L-alanyl-gamma-D-glutamyl-meso-2,6-diaminopimeloyl-D-alanyl-D-alanine + di-trans,octa-cis-undecaprenyl phosphate = di-trans,octa-cis-undecaprenyl diphospho-N-acetyl-alpha-D-muramoyl-L-alanyl-D-glutamyl-meso-2,6-diaminopimeloyl-D-alanyl-D-alanine + UMP. The protein operates within cell wall biogenesis; peptidoglycan biosynthesis. Catalyzes the initial step of the lipid cycle reactions in the biosynthesis of the cell wall peptidoglycan: transfers peptidoglycan precursor phospho-MurNAc-pentapeptide from UDP-MurNAc-pentapeptide onto the lipid carrier undecaprenyl phosphate, yielding undecaprenyl-pyrophosphoryl-MurNAc-pentapeptide, known as lipid I. The sequence is that of Phospho-N-acetylmuramoyl-pentapeptide-transferase from Vibrio cholerae serotype O1 (strain M66-2).